Reading from the N-terminus, the 110-residue chain is Large ribosomal subunit protein uL22 (110 aa).

This sequence belongs to the universal ribosomal protein uL22 family. In terms of assembly, part of the 50S ribosomal subunit.

In terms of biological role, this protein binds specifically to 23S rRNA; its binding is stimulated by other ribosomal proteins, e.g. L4, L17, and L20. It is important during the early stages of 50S assembly. It makes multiple contacts with different domains of the 23S rRNA in the assembled 50S subunit and ribosome. Functionally, the globular domain of the protein is located near the polypeptide exit tunnel on the outside of the subunit, while an extended beta-hairpin is found that lines the wall of the exit tunnel in the center of the 70S ribosome. This chain is Large ribosomal subunit protein uL22, found in Colwellia psychrerythraea (strain 34H / ATCC BAA-681) (Vibrio psychroerythus).